The sequence spans 64 residues: Large ribosomal subunit protein bL35c (64 aa).

Belongs to the bacterial ribosomal protein bL35 family.

Its subcellular location is the plastid. The protein localises to the chloroplast. This chain is Large ribosomal subunit protein bL35c, found in Cyanidium caldarium (Red alga).